A 379-amino-acid chain; its full sequence is Chaperone protein DnaJ (379 aa).

In terms of domain architecture, J spans 5–69 (EYYERLGVDK…QKRAAYDQYG (65 aa)). Residues 141–223 (GVEKQVKYNR…CHGSGHEKVA (83 aa)) form a CR-type zinc finger. 8 residues coordinate Zn(2+): Cys154, Cys157, Cys171, Cys174, Cys197, Cys200, Cys211, and Cys214. CXXCXGXG motif repeat units lie at residues 154-161 (CHTCDGSG), 171-178 (CHKCGGRG), 197-204 (CDVCHGTG), and 211-218 (CTTCHGSG).

The protein belongs to the DnaJ family. As to quaternary structure, homodimer. The cofactor is Zn(2+).

It localises to the cytoplasm. Participates actively in the response to hyperosmotic and heat shock by preventing the aggregation of stress-denatured proteins and by disaggregating proteins, also in an autonomous, DnaK-independent fashion. Unfolded proteins bind initially to DnaJ; upon interaction with the DnaJ-bound protein, DnaK hydrolyzes its bound ATP, resulting in the formation of a stable complex. GrpE releases ADP from DnaK; ATP binding to DnaK triggers the release of the substrate protein, thus completing the reaction cycle. Several rounds of ATP-dependent interactions between DnaJ, DnaK and GrpE are required for fully efficient folding. Also involved, together with DnaK and GrpE, in the DNA replication of plasmids through activation of initiation proteins. The protein is Chaperone protein DnaJ of Lactococcus lactis subsp. cremoris (strain SK11).